Reading from the N-terminus, the 417-residue chain is NADH-quinone oxidoreductase subunit D (417 aa).

Belongs to the complex I 49 kDa subunit family. NDH-1 is composed of 14 different subunits. Subunits NuoB, C, D, E, F, and G constitute the peripheral sector of the complex.

The protein localises to the cell inner membrane. It carries out the reaction a quinone + NADH + 5 H(+)(in) = a quinol + NAD(+) + 4 H(+)(out). NDH-1 shuttles electrons from NADH, via FMN and iron-sulfur (Fe-S) centers, to quinones in the respiratory chain. The immediate electron acceptor for the enzyme in this species is believed to be ubiquinone. Couples the redox reaction to proton translocation (for every two electrons transferred, four hydrogen ions are translocated across the cytoplasmic membrane), and thus conserves the redox energy in a proton gradient. This chain is NADH-quinone oxidoreductase subunit D, found in Francisella tularensis subsp. tularensis (strain FSC 198).